Here is a 267-residue protein sequence, read N- to C-terminus: Large ribosomal subunit protein mL57 (267 aa).

Residues 43–54 (SSSAVQQEQDAS) show a composition bias toward low complexity. Residues 43–73 (SSSAVQQEQDASGTSSSQQPRPRWSYTPERM) form a disordered region.

Belongs to the ribonuclease III family. Mitochondrion-specific ribosomal protein mL57 subfamily. Component of the mitochondrial large ribosomal subunit (mt-LSU). Mature N.crassa 74S mitochondrial ribosomes consist of a small (37S) and a large (54S) subunit. The 37S small subunit contains a 16S ribosomal RNA (16S mt-rRNA) and 32 different proteins. The 54S large subunit contains a 23S rRNA (23S mt-rRNA) and 42 different proteins. mL57 forms a heterodimer with mL44 and stabilizes rRNA expansion segments 1/2 at a membrane-facing protuberance close to the point of attachment of the ribosome to the translocon in the membrane.

The protein resides in the mitochondrion. Component of the mitochondrial ribosome (mitoribosome), a dedicated translation machinery responsible for the synthesis of mitochondrial genome-encoded proteins, including at least some of the essential transmembrane subunits of the mitochondrial respiratory chain. The mitoribosomes are attached to the mitochondrial inner membrane and translation products are cotranslationally integrated into the membrane. This chain is Large ribosomal subunit protein mL57 (mrpl15), found in Neurospora crassa (strain ATCC 24698 / 74-OR23-1A / CBS 708.71 / DSM 1257 / FGSC 987).